Here is a 1252-residue protein sequence, read N- to C-terminus: Guanine nucleotide exchange factor SDC25 (1252 aa).

An SH3 domain is found at 26–97; it reads QPIDVVECTY…PPSFTRSILN (72 aa). 2 disordered regions span residues 409-454 and 623-648; these read IPAS…DTIW and LNLDNAKDKKNGSQNTDIQEEEDEYE. Over residues 416–428 the composition is skewed to low complexity; it reads TSCSSETSHHSPS. Residues 782–914 form the N-terminal Ras-GEF domain; the sequence is SNNRIKGGSK…LLKEVNQKFK (133 aa). Positions 952-1199 constitute a Ras-GEF domain; sequence DPVLFATQLT…YQLSLIIEPK (248 aa). A disordered region spans residues 1201–1252; the sequence is RKKVVPNSNSNNKSQEKSRDDQTDEGKTSTKKDRFSKFQLHKTKKKAPKVSK. Residues 1214 to 1236 are compositionally biased toward basic and acidic residues; that stretch reads SQEKSRDDQTDEGKTSTKKDRFS. Positions 1239 to 1252 are enriched in basic residues; that stretch reads QLHKTKKKAPKVSK.

Functionally, promotes the exchange of Ras-bound GDP by GTP. In Saccharomyces cerevisiae (strain RM11-1a) (Baker's yeast), this protein is Guanine nucleotide exchange factor SDC25 (SDC25).